The chain runs to 112 residues: Peptidyl-prolyl cis-trans isomerase (112 aa).

The tract at residues methionine 1–arginine 22 is disordered. A PPIase FKBP-type domain is found at glycine 20–asparagine 108.

Belongs to the FKBP-type PPIase family. FKBP1 subfamily.

It localises to the cytoplasm. Its subcellular location is the nucleus. The catalysed reaction is [protein]-peptidylproline (omega=180) = [protein]-peptidylproline (omega=0). Its function is as follows. PPIases accelerate the folding of proteins. It catalyzes the cis-trans isomerization of proline imidic peptide bonds in oligopeptides. Has an important role in sexual development and serves as the target for rapamycin action. The chain is Peptidyl-prolyl cis-trans isomerase (fkh1) from Schizosaccharomyces pombe (strain 972 / ATCC 24843) (Fission yeast).